We begin with the raw amino-acid sequence, 668 residues long: DNA ligase (668 aa).

NAD(+) contacts are provided by residues 34–38 (DAEYD), 83–84 (SL), and Glu-117. Lys-119 functions as the N6-AMP-lysine intermediate in the catalytic mechanism. Positions 140, 177, 293, and 317 each coordinate NAD(+). Zn(2+) is bound by residues Cys-411, Cys-414, Cys-429, and Cys-434. The region spanning 591 to 668 (RVGGRFTGKT…SEDDFLELMQ (78 aa)) is the BRCT domain.

This sequence belongs to the NAD-dependent DNA ligase family. LigA subfamily. The cofactor is Mg(2+). It depends on Mn(2+) as a cofactor.

The catalysed reaction is NAD(+) + (deoxyribonucleotide)n-3'-hydroxyl + 5'-phospho-(deoxyribonucleotide)m = (deoxyribonucleotide)n+m + AMP + beta-nicotinamide D-nucleotide.. Functionally, DNA ligase that catalyzes the formation of phosphodiester linkages between 5'-phosphoryl and 3'-hydroxyl groups in double-stranded DNA using NAD as a coenzyme and as the energy source for the reaction. It is essential for DNA replication and repair of damaged DNA. The sequence is that of DNA ligase from Citrifermentans bemidjiense (strain ATCC BAA-1014 / DSM 16622 / JCM 12645 / Bem) (Geobacter bemidjiensis).